A 119-amino-acid chain; its full sequence is Autophagy-related protein 8c (119 aa).

Residue G117 is the site of Phosphatidylethanolamine amidated glycine attachment. A propeptide spans 118-119 (LV) (removed in mature form).

The protein belongs to the ATG8 family. Interacts with ATG4. Interacts with NBR1. Post-translationally, the C-terminal 2 residues are removed by ATG4 to expose Gly-117 at the C-terminus. This Gly-117 forms then a thioester bond with the 'Cys-558' of ATG7 (E1-like activating enzyme) before being transferred to the 'Cys-258' of ATG3 (the specific E2 conjugating enzyme), in order to be finally amidated with phosphatidylethanolamine. This lipid modification anchors ATG8 to autophagosomes. In terms of tissue distribution, constitutively expressed.

Its subcellular location is the cytoplasmic vesicle. It localises to the autophagosome membrane. The protein localises to the vacuole membrane. It is found in the cytoplasm. The protein resides in the cytoskeleton. Functionally, ubiquitin-like modifier involved in autophagosomes formation. May mediate the delivery of the autophagosomes to the vacuole via the microtubule cytoskeleton. The chain is Autophagy-related protein 8c (ATG8C) from Arabidopsis thaliana (Mouse-ear cress).